The primary structure comprises 195 residues: Imidazoleglycerol-phosphate dehydratase (195 aa).

Belongs to the imidazoleglycerol-phosphate dehydratase family.

The protein localises to the cytoplasm. The enzyme catalyses D-erythro-1-(imidazol-4-yl)glycerol 3-phosphate = 3-(imidazol-4-yl)-2-oxopropyl phosphate + H2O. It participates in amino-acid biosynthesis; L-histidine biosynthesis; L-histidine from 5-phospho-alpha-D-ribose 1-diphosphate: step 6/9. In Cereibacter sphaeroides (strain ATCC 17025 / ATH 2.4.3) (Rhodobacter sphaeroides), this protein is Imidazoleglycerol-phosphate dehydratase.